The chain runs to 216 residues: Small ribosomal subunit protein uS5 (216 aa).

The region spanning 51–114 is the S5 DRBM domain; sequence LEEEVIDVNL…DDAKFNIIKV (64 aa).

This sequence belongs to the universal ribosomal protein uS5 family. In terms of assembly, part of the 30S ribosomal subunit. Contacts protein S4.

In terms of biological role, with S4 and S12 plays an important role in translational accuracy. The protein is Small ribosomal subunit protein uS5 of Methanothermobacter thermautotrophicus (strain ATCC 29096 / DSM 1053 / JCM 10044 / NBRC 100330 / Delta H) (Methanobacterium thermoautotrophicum).